The following is a 261-amino-acid chain: Guanine nucleotide exchange factor BopE (261 aa).

The protein belongs to the GEF (guanine exchange factor) SopE family. As to quaternary structure, monomer. Interacts with human CDC42.

It is found in the secreted. Functionally, activator for both CDC42 and RAC1 by directly interacting with these Rho GTPases and acting as a guanine nucleotide exchange factor (GEF). This activation results in actin cytoskeleton rearrangements and stimulates membrane ruffling, thus promoting bacterial entry into non-phagocytic cells. This chain is Guanine nucleotide exchange factor BopE (bopE), found in Burkholderia pseudomallei (strain 1710b).